Here is a 563-residue protein sequence, read N- to C-terminus: Alpha-keto-acid decarboxylase (563 aa).

Residue glutamate 59 coordinates thiamine diphosphate. The tract at residues 348 to 367 (SPPVASPPAEPLPPPPPREQ) is disordered. The segment covering 351-366 (VASPPAEPLPPPPPRE) has biased composition (pro residues). Residues 394–476 (TSFYGMADHR…VVVNNDGYTV (83 aa)) are thiamine pyrophosphate binding. Mg(2+) is bound by residues aspartate 444, asparagine 471, and glycine 473.

It belongs to the TPP enzyme family. A metal cation serves as cofactor. It depends on thiamine diphosphate as a cofactor.

In terms of biological role, decarboxylates branched-chain and aromatic alpha-keto acids to aldehydes. This chain is Alpha-keto-acid decarboxylase (kdc), found in Mycobacterium avium (strain 104).